The chain runs to 385 residues: tRNA-specific 2-thiouridylase MnmA (385 aa).

ATP is bound by residues 18–25 (AMSGGVDS) and leucine 44. Cysteine 112 functions as the Nucleophile in the catalytic mechanism. A disulfide bridge connects residues cysteine 112 and cysteine 209. Glycine 136 provides a ligand contact to ATP. Residues 159–161 (RDQ) are interaction with tRNA. Cysteine 209 functions as the Cysteine persulfide intermediate in the catalytic mechanism.

It belongs to the MnmA/TRMU family.

The protein localises to the cytoplasm. It catalyses the reaction S-sulfanyl-L-cysteinyl-[protein] + uridine(34) in tRNA + AH2 + ATP = 2-thiouridine(34) in tRNA + L-cysteinyl-[protein] + A + AMP + diphosphate + H(+). Its function is as follows. Catalyzes the 2-thiolation of uridine at the wobble position (U34) of tRNA, leading to the formation of s(2)U34. The sequence is that of tRNA-specific 2-thiouridylase MnmA from Methylorubrum populi (strain ATCC BAA-705 / NCIMB 13946 / BJ001) (Methylobacterium populi).